Reading from the N-terminus, the 692-residue chain is Glycine--tRNA ligase beta subunit (692 aa).

It belongs to the class-II aminoacyl-tRNA synthetase family. In terms of assembly, tetramer of two alpha and two beta subunits.

It localises to the cytoplasm. It catalyses the reaction tRNA(Gly) + glycine + ATP = glycyl-tRNA(Gly) + AMP + diphosphate. This is Glycine--tRNA ligase beta subunit from Hahella chejuensis (strain KCTC 2396).